We begin with the raw amino-acid sequence, 89 residues long: Co-chaperonin GroES (89 aa).

Belongs to the GroES chaperonin family. In terms of assembly, heptamer of 7 subunits arranged in a ring. Interacts with the chaperonin GroEL.

It localises to the cytoplasm. Its function is as follows. Together with the chaperonin GroEL, plays an essential role in assisting protein folding. The GroEL-GroES system forms a nano-cage that allows encapsulation of the non-native substrate proteins and provides a physical environment optimized to promote and accelerate protein folding. GroES binds to the apical surface of the GroEL ring, thereby capping the opening of the GroEL channel. The protein is Co-chaperonin GroES of Fervidobacterium nodosum (strain ATCC 35602 / DSM 5306 / Rt17-B1).